We begin with the raw amino-acid sequence, 292 residues long: Ribosomal protein L11 methyltransferase (292 aa).

S-adenosyl-L-methionine contacts are provided by T144, G165, D187, and N229.

The protein belongs to the methyltransferase superfamily. PrmA family.

It localises to the cytoplasm. The enzyme catalyses L-lysyl-[protein] + 3 S-adenosyl-L-methionine = N(6),N(6),N(6)-trimethyl-L-lysyl-[protein] + 3 S-adenosyl-L-homocysteine + 3 H(+). Methylates ribosomal protein L11. The chain is Ribosomal protein L11 methyltransferase from Saccharophagus degradans (strain 2-40 / ATCC 43961 / DSM 17024).